Here is a 502-residue protein sequence, read N- to C-terminus: UDP-N-acetylmuramoylalanine--D-glutamate ligase (502 aa).

136–142 is an ATP binding site; that stretch reads GTNGKTT.

Belongs to the MurCDEF family.

It is found in the cytoplasm. It carries out the reaction UDP-N-acetyl-alpha-D-muramoyl-L-alanine + D-glutamate + ATP = UDP-N-acetyl-alpha-D-muramoyl-L-alanyl-D-glutamate + ADP + phosphate + H(+). It functions in the pathway cell wall biogenesis; peptidoglycan biosynthesis. In terms of biological role, cell wall formation. Catalyzes the addition of glutamate to the nucleotide precursor UDP-N-acetylmuramoyl-L-alanine (UMA). This is UDP-N-acetylmuramoylalanine--D-glutamate ligase from Corynebacterium jeikeium (strain K411).